We begin with the raw amino-acid sequence, 103 residues long: Small ribosomal subunit protein uS14c (103 aa).

The disordered stretch occupies residues 34–56; the sequence is KVSPLSLSEKTKMQEKLQSLPRN.

Belongs to the universal ribosomal protein uS14 family. As to quaternary structure, part of the 30S ribosomal subunit.

The protein localises to the plastid. It is found in the chloroplast. Functionally, binds 16S rRNA, required for the assembly of 30S particles. The chain is Small ribosomal subunit protein uS14c from Saccharum hybrid (Sugarcane).